The sequence spans 362 residues: Ferrochelatase (362 aa).

The Fe cation site is built by His212 and Glu294.

This sequence belongs to the ferrochelatase family.

The protein localises to the cytoplasm. It carries out the reaction heme b + 2 H(+) = protoporphyrin IX + Fe(2+). It participates in porphyrin-containing compound metabolism; protoheme biosynthesis; protoheme from protoporphyrin-IX: step 1/1. Its function is as follows. Catalyzes the ferrous insertion into protoporphyrin IX. This chain is Ferrochelatase, found in Leptospira biflexa serovar Patoc (strain Patoc 1 / Ames).